The chain runs to 219 residues: Holliday junction branch migration complex subunit RuvA (219 aa).

The interval 1-67 (MIGWLRGERI…DDGSSLFGFP (67 aa)) is domain I. Positions 68–146 (DRRERDLFRV…AWSAEKNSDH (79 aa)) are domain II. The flexible linker stretch occupies residues 147 to 161 (SDLSLVDRSDLKSLP). Residues 162–219 (IEPDPLQDLQLTLSTLGYEDLEIRRAMRAVATGEEVPAANDGDGWLRASLRWLNRPSA) form a domain III region.

The protein belongs to the RuvA family. As to quaternary structure, homotetramer. Forms an RuvA(8)-RuvB(12)-Holliday junction (HJ) complex. HJ DNA is sandwiched between 2 RuvA tetramers; dsDNA enters through RuvA and exits via RuvB. An RuvB hexamer assembles on each DNA strand where it exits the tetramer. Each RuvB hexamer is contacted by two RuvA subunits (via domain III) on 2 adjacent RuvB subunits; this complex drives branch migration. In the full resolvosome a probable DNA-RuvA(4)-RuvB(12)-RuvC(2) complex forms which resolves the HJ.

The protein localises to the cytoplasm. The RuvA-RuvB-RuvC complex processes Holliday junction (HJ) DNA during genetic recombination and DNA repair, while the RuvA-RuvB complex plays an important role in the rescue of blocked DNA replication forks via replication fork reversal (RFR). RuvA specifically binds to HJ cruciform DNA, conferring on it an open structure. The RuvB hexamer acts as an ATP-dependent pump, pulling dsDNA into and through the RuvAB complex. HJ branch migration allows RuvC to scan DNA until it finds its consensus sequence, where it cleaves and resolves the cruciform DNA. This chain is Holliday junction branch migration complex subunit RuvA, found in Synechococcus sp. (strain CC9311).